Here is a 292-residue protein sequence, read N- to C-terminus: ATP synthase gamma chain (292 aa).

Belongs to the ATPase gamma chain family. F-type ATPases have 2 components, CF(1) - the catalytic core - and CF(0) - the membrane proton channel. CF(1) has five subunits: alpha(3), beta(3), gamma(1), delta(1), epsilon(1). CF(0) has three main subunits: a, b and c.

Its subcellular location is the cell inner membrane. Produces ATP from ADP in the presence of a proton gradient across the membrane. The gamma chain is believed to be important in regulating ATPase activity and the flow of protons through the CF(0) complex. This Nitrobacter winogradskyi (strain ATCC 25391 / DSM 10237 / CIP 104748 / NCIMB 11846 / Nb-255) protein is ATP synthase gamma chain.